The following is a 304-amino-acid chain: Acetyl-coenzyme A carboxylase carboxyl transferase subunit beta (304 aa).

The 270-residue stretch at 23–292 folds into the CoA carboxyltransferase N-terminal domain; it reads VWTKCDSCGQ…PNPEAPREGV (270 aa). Residues C27, C30, C46, and C49 each coordinate Zn(2+). Residues 27–49 form a C4-type zinc finger; that stretch reads CDSCGQVLYRAELERNLEVCPKC. Positions 284-304 are disordered; sequence NPEAPREGVVVPPVPDQEPEA. Over residues 295-304 the composition is skewed to pro residues; sequence PPVPDQEPEA.

The protein belongs to the AccD/PCCB family. Acetyl-CoA carboxylase is a heterohexamer composed of biotin carboxyl carrier protein (AccB), biotin carboxylase (AccC) and two subunits each of ACCase subunit alpha (AccA) and ACCase subunit beta (AccD). The cofactor is Zn(2+).

The protein resides in the cytoplasm. The catalysed reaction is N(6)-carboxybiotinyl-L-lysyl-[protein] + acetyl-CoA = N(6)-biotinyl-L-lysyl-[protein] + malonyl-CoA. The protein operates within lipid metabolism; malonyl-CoA biosynthesis; malonyl-CoA from acetyl-CoA: step 1/1. Component of the acetyl coenzyme A carboxylase (ACC) complex. Biotin carboxylase (BC) catalyzes the carboxylation of biotin on its carrier protein (BCCP) and then the CO(2) group is transferred by the transcarboxylase to acetyl-CoA to form malonyl-CoA. This chain is Acetyl-coenzyme A carboxylase carboxyl transferase subunit beta, found in Escherichia coli O6:K15:H31 (strain 536 / UPEC).